Reading from the N-terminus, the 318-residue chain is Aspartate carbamoyltransferase catalytic subunit (318 aa).

Residues Arg-64 and Thr-65 each contribute to the carbamoyl phosphate site. L-aspartate is bound at residue Lys-92. Residues Arg-114, His-142, and Gln-145 each coordinate carbamoyl phosphate. L-aspartate is bound by residues Arg-176 and Arg-230. The carbamoyl phosphate site is built by Gly-271 and Pro-272.

Belongs to the aspartate/ornithine carbamoyltransferase superfamily. ATCase family. In terms of assembly, heterododecamer (2C3:3R2) of six catalytic PyrB chains organized as two trimers (C3), and six regulatory PyrI chains organized as three dimers (R2).

It carries out the reaction carbamoyl phosphate + L-aspartate = N-carbamoyl-L-aspartate + phosphate + H(+). It participates in pyrimidine metabolism; UMP biosynthesis via de novo pathway; (S)-dihydroorotate from bicarbonate: step 2/3. Its function is as follows. Catalyzes the condensation of carbamoyl phosphate and aspartate to form carbamoyl aspartate and inorganic phosphate, the committed step in the de novo pyrimidine nucleotide biosynthesis pathway. The protein is Aspartate carbamoyltransferase catalytic subunit of Desulfovibrio desulfuricans (strain ATCC 27774 / DSM 6949 / MB).